Here is a 245-residue protein sequence, read N- to C-terminus: MAEELSAATSYTEDDFYCPVCQEVLKTPVRTAACQHVFCRKCFLTAMRESGIHCPLCRGNVTRRERACPERALDLENIMRKFSGSCRCCAKQIKFYRMRHHYKSCKKYQDEYGVSSIIPNFQISQDSVGNSNRSETSASDNIETYQENTGSSGHPTFKCPLCQESNFTRQRLLDHCNSNHLFQIVPVTCPICVSLPWGDPSQVTRNFVSHLNQRHQFDYGEFVNLQLDEETQYQTAVEESFQVNI.

Alanine 2 is modified (N-acetylalanine). Residues 18 to 58 form an RING-type zinc finger; it reads CPVCQEVLKTPVRTAACQHVFCRKCFLTAMRESGIHCPLCR. Cysteine 86, cysteine 89, histidine 101, and cysteine 105 together coordinate Zn(2+). The C2HC RNF-type zinc-finger motif lies at 86–105; the sequence is CRCCAKQIKFYRMRHHYKSC. Residues 128–153 are disordered; sequence VGNSNRSETSASDNIETYQENTGSSG. C2H2-type zinc fingers lie at residues 157-180 and 187-215; these read FKCP…NSNH and VTCP…NQRH. A UIM domain is found at 225–243; the sequence is LQLDEETQYQTAVEESFQV.

As to quaternary structure, interacts with NLK. Interacts with XRCC5/Ku80. Interacts with RBBP8/CtIP. Post-translationally, auto-ubiquitinated.

The protein resides in the chromosome. It carries out the reaction S-ubiquitinyl-[E2 ubiquitin-conjugating enzyme]-L-cysteine + [acceptor protein]-L-lysine = [E2 ubiquitin-conjugating enzyme]-L-cysteine + N(6)-ubiquitinyl-[acceptor protein]-L-lysine.. It participates in protein modification; protein ubiquitination. In terms of biological role, E3 ubiquitin-protein ligase involved in DNA damage response by promoting DNA resection and homologous recombination. Recruited to sites of double-strand breaks following DNA damage and specifically promotes double-strand break repair via homologous recombination. Two different, non-exclusive, mechanisms have been proposed. According to a report, regulates the choice of double-strand break repair by favoring homologous recombination over non-homologous end joining (NHEJ): acts by mediating ubiquitination of XRCC5/Ku80, leading to remove the Ku complex from DNA breaks, thereby promoting homologous recombination. According to another report, cooperates with UBE2Ds E2 ubiquitin ligases (UBE2D1, UBE2D2, UBE2D3 or UBE2D4) to promote homologous recombination by mediating ubiquitination of RBBP8/CtIP. Together with NLK, involved in the ubiquitination and degradation of TCF/LEF. Also exhibits auto-ubiquitination activity in combination with UBE2K. May act as a negative regulator in the Wnt/beta-catenin-mediated signaling pathway. In Bos taurus (Bovine), this protein is E3 ubiquitin-protein ligase RNF138 (RNF138).